Here is a 186-residue protein sequence, read N- to C-terminus: Elongation factor P (186 aa).

This sequence belongs to the elongation factor P family.

The protein localises to the cytoplasm. The protein operates within protein biosynthesis; polypeptide chain elongation. Involved in peptide bond synthesis. Stimulates efficient translation and peptide-bond synthesis on native or reconstituted 70S ribosomes in vitro. Probably functions indirectly by altering the affinity of the ribosome for aminoacyl-tRNA, thus increasing their reactivity as acceptors for peptidyl transferase. This chain is Elongation factor P, found in Mycoplasmopsis synoviae (strain 53) (Mycoplasma synoviae).